The primary structure comprises 248 residues: ATP synthase delta chain, chloroplastic (248 aa).

The transit peptide at 1–60 (MAALQQTPITFQSRSPPPTQIISGPTAKLSFSGGLKLPKLTIKLRSNRTSRRGGGAAGSK) directs the protein to the chloroplast.

It belongs to the ATPase delta chain family. F-type ATPases have 2 components, CF(1) - the catalytic core - and CF(0) - the membrane proton channel. CF(1) has five subunits: alpha(3), beta(3), gamma(1), delta(1), epsilon(1). CF(0) has three main subunits: a, b and c.

Its subcellular location is the plastid. The protein localises to the chloroplast thylakoid membrane. This protein seems to be part of the stalk that links CF(0) to CF(1). It either transmits conformational changes from CF(0) into CF(1) or is implicated in proton conduction. This is ATP synthase delta chain, chloroplastic (ATPD) from Nicotiana tabacum (Common tobacco).